Reading from the N-terminus, the 883-residue chain is Translation initiation factor IF-2 (883 aa).

2 disordered regions span residues 52 to 102 and 115 to 297; these read KGRD…VNVE and VEAE…PTQP. 2 stretches are compositionally biased toward basic and acidic residues: residues 115–179 and 204–237; these read VEAE…REAT and AAEKEEARRREEEKERRRLEQEARREREAEERAA. Positions 239 to 248 are enriched in low complexity; that stretch reads KTGATAPAAK. The segment covering 265–275 has biased composition (basic residues); that stretch reads PGRRGGKKGGR. The segment covering 276 to 285 has biased composition (low complexity); that stretch reads RAASGGEAAK. The tr-type G domain maps to 383 to 550; the sequence is PRPPVVTVMG…AILLQAELME (168 aa). The tract at residues 392–399 is G1; sequence GHVDHGKT. Position 392-399 (392-399) interacts with GTP; the sequence is GHVDHGKT. Residues 417–421 form a G2 region; the sequence is GITQH. The segment at 438-441 is G3; it reads DTPG. Residues 438-442 and 492-495 each bind GTP; these read DTPGH and NKID. The interval 492–495 is G4; it reads NKID. Residues 528 to 530 are G5; sequence SAK.

It belongs to the TRAFAC class translation factor GTPase superfamily. Classic translation factor GTPase family. IF-2 subfamily.

The protein localises to the cytoplasm. In terms of biological role, one of the essential components for the initiation of protein synthesis. Protects formylmethionyl-tRNA from spontaneous hydrolysis and promotes its binding to the 30S ribosomal subunits. Also involved in the hydrolysis of GTP during the formation of the 70S ribosomal complex. The polypeptide is Translation initiation factor IF-2 (Alkalilimnicola ehrlichii (strain ATCC BAA-1101 / DSM 17681 / MLHE-1)).